A 471-amino-acid chain; its full sequence is NADH-quinone oxidoreductase subunit N 1 (471 aa).

Transmembrane regions (helical) follow at residues 11–31 (ALVPEITLLVSAVTGLLAGAW), 39–59 (TIHVLAALATVVGLVATALAA), 81–101 (AIVLVAVLALIALSRDTVAGH), 105–125 (TEFVVLLQLGALGSIALAGAG), 127–147 (LIMLFAAFLLASVPFYALAGW), 162–182 (LAGALAGVTTAAGVTILFGVA), 200–220 (AAAAVGLIAVLAGLAFKAGAV), 234–254 (PPPVAAALTTVPKIGALVAFY), 270–290 (LITAVLATAGMTLGNLAAFAQ), 296–316 (MLGYSTVSQVGYLLMAVAVAG), 324–344 (ALLLYLAAYALTNIAGFAVVA), 365–385 (ALALTVALLGLVGTPPTAVFV), 398–418 (GLAWLVVIAALNTLASLFYYL), and 444–464 (AVALTTAALTLLLGIGSGIVL).

This sequence belongs to the complex I subunit 2 family. As to quaternary structure, NDH-1 is composed of 14 different subunits. Subunits NuoA, H, J, K, L, M, N constitute the membrane sector of the complex.

The protein localises to the cell membrane. It carries out the reaction a quinone + NADH + 5 H(+)(in) = a quinol + NAD(+) + 4 H(+)(out). NDH-1 shuttles electrons from NADH, via FMN and iron-sulfur (Fe-S) centers, to quinones in the respiratory chain. The immediate electron acceptor for the enzyme in this species is believed to be a menaquinone. Couples the redox reaction to proton translocation (for every two electrons transferred, four hydrogen ions are translocated across the cytoplasmic membrane), and thus conserves the redox energy in a proton gradient. This Streptomyces griseus subsp. griseus (strain JCM 4626 / CBS 651.72 / NBRC 13350 / KCC S-0626 / ISP 5235) protein is NADH-quinone oxidoreductase subunit N 1.